A 229-amino-acid chain; its full sequence is Large ribosomal subunit protein uL1 (229 aa).

The protein belongs to the universal ribosomal protein uL1 family. As to quaternary structure, part of the 50S ribosomal subunit.

Functionally, binds directly to 23S rRNA. The L1 stalk is quite mobile in the ribosome, and is involved in E site tRNA release. Its function is as follows. Protein L1 is also a translational repressor protein, it controls the translation of the L11 operon by binding to its mRNA. The polypeptide is Large ribosomal subunit protein uL1 (Haemophilus ducreyi (strain 35000HP / ATCC 700724)).